The chain runs to 273 residues: Undecaprenyl-diphosphatase (273 aa).

Transmembrane regions (helical) follow at residues 6-26, 45-65, 90-110, 116-136, 190-210, 222-242, and 252-272; these read SLLIAAILGVVEGLTEFLPVS, AKTFEVVIQLGSILAVVVMFW, LTLIHILLGMIPAVVLGLVFH, LFNPINVMYALVVGGLLLIAA, YAASEFSFLLAVPMMMGATVL, ADIPMFAVGFVTAFVVALIAI, and ISFIPFAIYRFVVAAAVYVVF.

This sequence belongs to the UppP family.

Its subcellular location is the cell inner membrane. The catalysed reaction is di-trans,octa-cis-undecaprenyl diphosphate + H2O = di-trans,octa-cis-undecaprenyl phosphate + phosphate + H(+). Its function is as follows. Catalyzes the dephosphorylation of undecaprenyl diphosphate (UPP). Confers resistance to bacitracin. The protein is Undecaprenyl-diphosphatase of Salmonella heidelberg (strain SL476).